A 343-amino-acid polypeptide reads, in one-letter code: 4-hydroxy-2-oxovalerate aldolase 1 (343 aa).

In terms of domain architecture, Pyruvate carboxyltransferase spans 8–260 (VTVHDMTLRD…ETGVDVAKIT (253 aa)). 16–17 (RD) serves as a coordination point for substrate. Position 17 (aspartate 17) interacts with Mn(2+). Residue histidine 20 is the Proton acceptor of the active site. Positions 170 and 199 each coordinate substrate. Histidine 199 and histidine 201 together coordinate Mn(2+). Position 290 (tyrosine 290) interacts with substrate.

The protein belongs to the 4-hydroxy-2-oxovalerate aldolase family.

The enzyme catalyses (S)-4-hydroxy-2-oxopentanoate = acetaldehyde + pyruvate. The chain is 4-hydroxy-2-oxovalerate aldolase 1 from Dechloromonas aromatica (strain RCB).